The following is a 912-amino-acid chain: Multiple C2 and transmembrane domain-containing protein (912 aa).

Positions 1–33 are enriched in low complexity; the sequence is MSRIQYVDQVDQVELDQQQQPGSSSTVSGSTPP. 2 disordered regions span residues 1 to 80 and 145 to 165; these read MSRI…KRAK and SSEG…IGGS. The span at 38 to 49 shows a compositional bias: polar residues; sequence PHGSPSLQQSQR. C2 domains follow at residues 218–337, 371–493, and 522–637; these read QANE…HLQL, RNSK…HLML, and ERYK…TLKD. Ca(2+)-binding residues include D252, D258, D305, D307, and D313. Ca(2+) contacts are provided by D553, D559, D605, and D607. A run of 2 helical transmembrane segments spans residues 729–749 and 826–846; these read IVAC…LIIL and LTWL…FVPL. The segment at 887-912 is disordered; sequence NQYRELPPSAPTDQTRNNPKKKLKGS.

Requires Ca(2+) as cofactor. As to expression, motor neurons (at protein level).

It is found in the endoplasmic reticulum membrane. Calcium sensor which is essential for the stabilization of normal baseline neurotransmitter release and for the induction and long-term maintenance of presynaptic homeostatic plasticity. In Drosophila melanogaster (Fruit fly), this protein is Multiple C2 and transmembrane domain-containing protein.